A 156-amino-acid polypeptide reads, in one-letter code: Small ribosomal subunit protein uS7 (156 aa).

This sequence belongs to the universal ribosomal protein uS7 family. Part of the 30S ribosomal subunit. Contacts proteins S9 and S11.

Its function is as follows. One of the primary rRNA binding proteins, it binds directly to 16S rRNA where it nucleates assembly of the head domain of the 30S subunit. Is located at the subunit interface close to the decoding center, probably blocks exit of the E-site tRNA. The polypeptide is Small ribosomal subunit protein uS7 (Rhodopseudomonas palustris (strain BisA53)).